The following is a 243-amino-acid chain: Probable transcriptional regulatory protein LCA_1307 (243 aa).

The tract at residues 1-21 (MSGHSKWHNIQGRKNAQDAKR) is disordered.

Belongs to the TACO1 family.

It localises to the cytoplasm. The chain is Probable transcriptional regulatory protein LCA_1307 from Latilactobacillus sakei subsp. sakei (strain 23K) (Lactobacillus sakei subsp. sakei).